We begin with the raw amino-acid sequence, 92 residues long: Protein EMB-1 (92 aa).

Basic and acidic residues-rich tracts occupy residues 1–16 (MASQQEKKELDARARQ), 37–61 (AEGRSKGGQTRKEQLGGEGYHEMGR), and 72–92 (GGERAEQEGIDIDESKFRTKK). A disordered region spans residues 1-92 (MASQQEKKEL…IDESKFRTKK (92 aa)).

The protein belongs to the small hydrophilic plant seed protein family. As to expression, expressed in embryogenic cells, somatic embryos and seeds at the later stages of development. In the embryos, expressed in the procambium, the root and shoot meristem and the protoderm of the cotyledons. Not detected in the endosperm or the aleurone layer, in young leaves or roots.

It is found in the nucleus. The protein is Protein EMB-1 of Daucus carota (Wild carrot).